Here is an 87-residue protein sequence, read N- to C-terminus: Envelope glycoprotein N (87 aa).

Residues methionine 1–glycine 24 form the signal peptide. Residues glutamate 25–serine 48 lie on the Virion surface side of the membrane. Residues methionine 49–leucine 69 form a helical membrane-spanning segment. Residues alanine 70 to tryptophan 87 are Intravirion-facing.

Belongs to the herpesviridae glycoprotein N family. In terms of assembly, interacts (via N-terminus) with gM (via N-terminus). The gM-gN heterodimer forms the gCII complex.

It is found in the virion membrane. It localises to the host membrane. The protein localises to the host Golgi apparatus. The protein resides in the host trans-Golgi network. Its function is as follows. Envelope glycoprotein necessary for proper maturation of gM and modulation of its membrane fusion activity. Also plays a critical role in virion morphogenesis. The polypeptide is Envelope glycoprotein N (Varicella-zoster virus (strain Dumas) (HHV-3)).